The primary structure comprises 225 residues: ATP synthase subunit a (225 aa).

The next 5 helical transmembrane spans lie at 16-36 (LFVY…VAKL), 79-99 (LVAT…IPGF), 105-125 (SLNL…FEGI), 176-196 (LFLL…AYAL), and 202-222 (VLQT…AVAI).

It belongs to the ATPase A chain family. As to quaternary structure, F-type ATPases have 2 components, CF(1) - the catalytic core - and CF(0) - the membrane proton channel. CF(1) has five subunits: alpha(3), beta(3), gamma(1), delta(1), epsilon(1). CF(0) has three main subunits: a(1), b(2) and c(9-12). The alpha and beta chains form an alternating ring which encloses part of the gamma chain. CF(1) is attached to CF(0) by a central stalk formed by the gamma and epsilon chains, while a peripheral stalk is formed by the delta and b chains.

The protein resides in the cell inner membrane. Its function is as follows. Key component of the proton channel; it plays a direct role in the translocation of protons across the membrane. In Campylobacter curvus (strain 525.92), this protein is ATP synthase subunit a.